A 509-amino-acid polypeptide reads, in one-letter code: Glycerol kinase (509 aa).

ADP is bound at residue T12. The ATP site is built by T12, T13, and S14. Residue T12 participates in sn-glycerol 3-phosphate binding. R16 serves as a coordination point for ADP. Residues R82, E83, Y134, and D245 each coordinate sn-glycerol 3-phosphate. R82, E83, Y134, D245, and Q246 together coordinate glycerol. The ADP site is built by T267 and G311. T267, G311, Q315, and G412 together coordinate ATP. The ADP site is built by G412 and N416.

It belongs to the FGGY kinase family.

It carries out the reaction glycerol + ATP = sn-glycerol 3-phosphate + ADP + H(+). Its pathway is polyol metabolism; glycerol degradation via glycerol kinase pathway; sn-glycerol 3-phosphate from glycerol: step 1/1. With respect to regulation, inhibited by fructose 1,6-bisphosphate (FBP). In terms of biological role, key enzyme in the regulation of glycerol uptake and metabolism. Catalyzes the phosphorylation of glycerol to yield sn-glycerol 3-phosphate. This Rhizorhabdus wittichii (strain DSM 6014 / CCUG 31198 / JCM 15750 / NBRC 105917 / EY 4224 / RW1) (Sphingomonas wittichii) protein is Glycerol kinase.